The primary structure comprises 704 residues: Fibulin-1 (704 aa).

The signal sequence occupies residues 1–25; the sequence is MDKLRGARPLRLLLLLLALLPALRG. 35 cysteine pairs are disulfide-bonded: Cys-33–Cys-59, Cys-34–Cys-66, Cys-47–Cys-67, Cys-76–Cys-107, Cys-89–Cys-108, Cys-110–Cys-134, Cys-111–Cys-141, Cys-124–Cys-142, Cys-181–Cys-191, Cys-187–Cys-200, Cys-202–Cys-215, Cys-221–Cys-234, Cys-228–Cys-243, Cys-249–Cys-261, Cys-267–Cys-280, Cys-274–Cys-289, Cys-295–Cys-307, Cys-313–Cys-326, Cys-320–Cys-335, Cys-342–Cys-355, Cys-361–Cys-374, Cys-368–Cys-383, Cys-385–Cys-398, Cys-404–Cys-416, Cys-412–Cys-425, Cys-427–Cys-440, Cys-446–Cys-455, Cys-451–Cys-464, Cys-466–Cys-480, Cys-486–Cys-499, Cys-495–Cys-508, Cys-510–Cys-524, Cys-530–Cys-543, Cys-537–Cys-552, and Cys-557–Cys-578. Anaphylatoxin-like domains lie at 33–74, 75–109, and 110–142; these read CCDK…LEEH, YCSD…KCCY, and CCLL…RACC. An N-linked (GlcNAc...) asparagine glycan is attached at Asn-96. Residues 177–216 form the EGF-like 1 domain; that stretch reads LHDGCRGGGPCSQQCRDTGSSYVCSCFVGYQLQPDGVNCE. An EGF-like 2; calcium-binding domain is found at 217-262; it reads DINECITGTHSCGIGQTCVNTLGSFRCQRDTSCGTGYELTDDSRCK. In terms of domain architecture, EGF-like 3; calcium-binding spans 263 to 308; it reads DIDECETGTHNCPPDFICQNTPGSFRCRPKLQCMNGFIQDALGNCI. The EGF-like 4; calcium-binding domain maps to 309–356; the sequence is DINECLSTNMPCPAGQICINTDGSYTCQRISPSCGRGYHLNEDGTRCV. An EGF-like 5; calcium-binding domain is found at 357–399; that stretch reads DVDECSSSDQPCGEGHVCINGPGNYRCECKSGYSFDVISRTCI. The self-association and FN1-binding stretch occupies residues 357–441; that stretch reads DVDECSSSDQ…KLSSDGRSCE (85 aa). Residues 400-441 form the EGF-like 6; calcium-binding domain; it reads DINECRRYPGRLCAHKCENTPGSYYCTCTMGFKLSSDGRSCE. Residues 442–481 enclose the EGF-like 7; calcium-binding domain; it reads DLNECESSPCSQECANVYGSYQCYCRRGFQLSDIDGISCE. An EGF-like 8; calcium-binding domain is found at 482–525; that stretch reads DIDECALPTGGHICSFRCINIPGSFQCTCPSTGYRLAPNARNCQ. Residues 526–579 form the EGF-like 9; calcium-binding domain; that stretch reads DIDECVAETHNCSFNETCFNIQGGFRCLSLECPENYRKSGDTVRLEKTDTIRCI. N-linked (GlcNAc...) asparagine glycosylation is found at Asn-536 and Asn-540.

The protein belongs to the fibulin family. Homomultimerizes and interacts with various extracellular matrix components.

The protein localises to the secreted. The protein resides in the extracellular space. Its subcellular location is the extracellular matrix. Functionally, incorporated into fibronectin-containing matrix fibers. May play a role in cell adhesion and migration along protein fibers within the extracellular matrix (ECM). Could be important for certain developmental processes and contribute to the supramolecular organization of ECM architecture, in particular to those of basement membranes. This is Fibulin-1 (FBLN1) from Gallus gallus (Chicken).